The sequence spans 130 residues: ASCGSTTVTAKNLISLAKKQVDYILGENPAKMSYMVGFGERYPQHVHHRGSSLPSVHAHPNPIPCNAGFQYLYSSSPNPNILVGAILGGPDSRDSFSDDRNNYQQSEPATYINAPLVGALAFFAANPVAN.

Active-site residues include H47, D98, and E107.

It belongs to the glycosyl hydrolase 9 (cellulase E) family.

The catalysed reaction is Endohydrolysis of (1-&gt;4)-beta-D-glucosidic linkages in cellulose, lichenin and cereal beta-D-glucans.. Its function is as follows. Involved in ripening fruit process. The protein is Endoglucanase 2 (CEL2) of Persea americana (Avocado).